The sequence spans 698 residues: Polyribonucleotide nucleotidyltransferase (698 aa).

Aspartate 485 and aspartate 491 together coordinate Mg(2+). Residues 552 to 611 form the KH domain; that stretch reads PRITTIKINPEKIRDVIGKGGAVIRALTEETGTTIELDDNGTVKIASSNGEATKEAIRRI. Residues 621–689 enclose the S1 motif domain; the sequence is GRIYNGKVIR…RQGRVRLSIK (69 aa).

This sequence belongs to the polyribonucleotide nucleotidyltransferase family. In terms of assembly, component of the RNA degradosome, which is a multiprotein complex involved in RNA processing and mRNA degradation. Requires Mg(2+) as cofactor.

Its subcellular location is the cytoplasm. The enzyme catalyses RNA(n+1) + phosphate = RNA(n) + a ribonucleoside 5'-diphosphate. In terms of biological role, involved in mRNA degradation. Catalyzes the phosphorolysis of single-stranded polyribonucleotides processively in the 3'- to 5'-direction. This Shewanella frigidimarina (strain NCIMB 400) protein is Polyribonucleotide nucleotidyltransferase.